A 212-amino-acid polypeptide reads, in one-letter code: Uridine kinase (212 aa).

An ATP-binding site is contributed by 13 to 20; sequence GGSGSGKT.

The protein belongs to the uridine kinase family.

The protein resides in the cytoplasm. It catalyses the reaction uridine + ATP = UMP + ADP + H(+). The enzyme catalyses cytidine + ATP = CMP + ADP + H(+). Its pathway is pyrimidine metabolism; CTP biosynthesis via salvage pathway; CTP from cytidine: step 1/3. The protein operates within pyrimidine metabolism; UMP biosynthesis via salvage pathway; UMP from uridine: step 1/1. This Bacillus cereus (strain ATCC 10987 / NRS 248) protein is Uridine kinase.